The sequence spans 469 residues: E3 ubiquitin-protein ligase TRAIP (469 aa).

The RING-type zinc finger occupies 7–50 (CTICSDFFDHSRDVAAIHCGHTFHLQCLIQWFETAPSRTCPQCR). Coiled-coil stretches lie at residues 70-177 (EENV…QSQR) and 201-280 (CVSL…TLNL). Positions 211–469 (LKEARKASGE…QAKLDTFLWS (259 aa)) are interaction with CYLD. K304 participates in a covalent cross-link: Glycyl lysine isopeptide (Lys-Gly) (interchain with G-Cter in SUMO2). The short motif at 460 to 469 (QAKLDTFLWS) is the PIP-box element.

This sequence belongs to the TRAIP family. Interacts (via PIP-box) with PCNA. Binds TRAF1, TRAF2, TRAF3, TRAF5 and TRAF6 is part of the receptor-TRAF signaling complex. May interact with CYLD; the C-terminus interacts with CYLD, however the interaction was not detected with the full-length protein. Interacts with POLK and POLN. Interacts with UIMC1. Post-translationally, sumoylated; sumoylation is required for nuclear localization. Sumoylation increases protein stability, possibly by preventing ubiquitination. Autoubiquitinated.

Its subcellular location is the nucleus. The protein resides in the nucleoplasm. It is found in the nucleolus. It localises to the chromosome. The protein localises to the cytoplasm. Its subcellular location is the perinuclear region. It catalyses the reaction S-ubiquitinyl-[E2 ubiquitin-conjugating enzyme]-L-cysteine + [acceptor protein]-L-lysine = [E2 ubiquitin-conjugating enzyme]-L-cysteine + N(6)-ubiquitinyl-[acceptor protein]-L-lysine.. The protein operates within protein modification; protein ubiquitination. Its function is as follows. E3 ubiquitin ligase required to protect genome stability in response to replication stress. Acts as a key regulator of interstrand cross-link repair, which takes place when both strands of duplex DNA are covalently tethered together, thereby blocking replication and transcription. Controls the choice between the two pathways of replication-coupled interstrand-cross-link repair by mediating ubiquitination of MCM7 subunit of the CMG helicase complex. Short ubiquitin chains on MCM7 promote recruitment of DNA glycosylase NEIL3. If the interstrand cross-link cannot be cleaved by NEIL3, the ubiquitin chains continue to grow on MCM7, promoting the unloading of the CMG helicase complex by the VCP/p97 ATPase, enabling the Fanconi anemia DNA repair pathway. Only catalyzes ubiquitination of MCM7 when forks converge. Also involved in the repair of covalent DNA-protein cross-links (DPCs) during DNA synthesis: promotes ubiquitination of DPCs, leading to their degradation by the proteasome. Has also been proposed to play a role in promoting translesion synthesis by mediating the assembly of 'Lys-63'-linked poly-ubiquitin chains on the Y-family polymerase POLN in order to facilitate bypass of DNA lesions and preserve genomic integrity. The function in translesion synthesis is however controversial. Acts as a regulator of the spindle assembly checkpoint. Also acts as a negative regulator of innate immune signaling by inhibiting activation of NF-kappa-B mediated by TNF. Negatively regulates TLR3/4- and RIG-I-mediated IRF3 activation and subsequent IFNB1 production and cellular antiviral response by promoting 'Lys-48'-linked polyubiquitination of TNK1 leading to its proteasomal degradation. In Homo sapiens (Human), this protein is E3 ubiquitin-protein ligase TRAIP.